A 559-amino-acid chain; its full sequence is Large neutral amino acids transporter small subunit 3 (559 aa).

The chain crosses the membrane as a helical span at residues 20 to 40; sequence VLENLFFSAVLLGWGSLLIIL. Asparagine 57 carries N-linked (GlcNAc...) asparagine glycosylation. 5 consecutive transmembrane segments (helical) span residues 78 to 98, 105 to 124, 131 to 151, 168 to 188, and 191 to 211; these read LGFT…GILM, PVRL…MALA, LSPL…CLTF, MALM…IKLI, and AGVA…LIFL. Asparagine 212 and asparagine 229 each carry an N-linked (GlcNAc...) asparagine glycan. Phosphoserine is present on residues serine 237, serine 262, and serine 267. 6 helical membrane passes run 304 to 324, 357 to 377, 419 to 439, 446 to 466, 485 to 505, and 510 to 530; these read FLWS…YMAA, SVFG…GYIM, AISA…TCLI, FVTF…CGSL, LISA…VGPL, and FWVN…PSYL.

Belongs to the SLC43A transporter (TC 2.A.1.44) family. Ubiquitously expressed in fetus and adult. Highest expression in adult pancreas, liver, skeletal muscle. In fetus, highest expression in liver and lower levels in kidney, and lung. Exclusively expressed in the glomeruli along the glomerular capillary walls.

It localises to the cell membrane. The protein resides in the apical cell membrane. The protein localises to the endoplasmic reticulum membrane. It carries out the reaction D-leucine(in) = D-leucine(out). The enzyme catalyses L-leucine(in) = L-leucine(out). The catalysed reaction is L-isoleucine(in) = L-isoleucine(out). It catalyses the reaction L-methionine(in) = L-methionine(out). It carries out the reaction L-phenylalanine(in) = L-phenylalanine(out). The enzyme catalyses L-valine(in) = L-valine(out). In terms of biological role, uniport that mediates the transport of neutral amino acids such as L-leucine, L-isoleucine, L-valine, and L-phenylalanine. The transport activity is sodium ions-independent, electroneutral and mediated by a facilitated diffusion. This is Large neutral amino acids transporter small subunit 3 from Homo sapiens (Human).